Here is a 490-residue protein sequence, read N- to C-terminus: Ribulose bisphosphate carboxylase large chain (490 aa).

Substrate-binding residues include Asn-127 and Thr-177. The active-site Proton acceptor is Lys-179. Residue Lys-181 participates in substrate binding. Positions 205, 207, and 208 each coordinate Mg(2+). An N6-carboxylysine modification is found at Lys-205. The Proton acceptor role is filled by His-297. Substrate-binding residues include Arg-298, His-330, and Ser-382.

The protein belongs to the RuBisCO large chain family. Type I subfamily. As to quaternary structure, heterohexadecamer of 8 large chains and 8 small chains. Mg(2+) serves as cofactor.

It is found in the plastid. It localises to the chloroplast. It catalyses the reaction 2 (2R)-3-phosphoglycerate + 2 H(+) = D-ribulose 1,5-bisphosphate + CO2 + H2O. The catalysed reaction is D-ribulose 1,5-bisphosphate + O2 = 2-phosphoglycolate + (2R)-3-phosphoglycerate + 2 H(+). In terms of biological role, ruBisCO catalyzes two reactions: the carboxylation of D-ribulose 1,5-bisphosphate, the primary event in carbon dioxide fixation, as well as the oxidative fragmentation of the pentose substrate in the photorespiration process. Both reactions occur simultaneously and in competition at the same active site. This is Ribulose bisphosphate carboxylase large chain from Trieres chinensis (Marine centric diatom).